The chain runs to 553 residues: Mannuronan C5-epimerase AlgE4 (553 aa).

8 PbH1 repeats span residues 133-155, 157-179, 180-202, 204-226, 234-256, 257-279, 280-301, and 320-342; these read DRDVTIERVEVREMSGYGFDPHE, TINLTIRDSVAHDNGLDGFVADY, LVDSVFENNVAYANDRHGFNVVT, THDFVMTNNVAYGNGSSGLVVQR, PSNILIDGGAYYDNAREGVLLKM, TSDITLQNADIHGNGSSGVRVYG, AQDVQILDNQIHDNAQAAAVPE, and TLNTRIEGNTISGSANSTYGIQE. The tract at residues 367 to 427 is disordered; sequence YGPHSTVSGE…DILDGGAGRD (61 aa). Hemolysin-type calcium-binding repeat units follow at residues 403–420 and 421–438; these read QGGSGADRLDGGAGDDIL and DGGAGRDRLSGGAGADTF.

Belongs to the D-mannuronate C5-epimerase family. The cofactor is Ca(2+).

It localises to the secreted. The enzyme catalyses [(1-&gt;4)-beta-D-mannuronosyl](n) = [alginate](n). It functions in the pathway glycan biosynthesis; alginate biosynthesis. Its activity is regulated as follows. Inhibited by zinc. In terms of biological role, converts beta-D-mannuronic acid (M) to alpha-L-guluronic acid (G), but introduces almost exclusively MG blocks, producing a polymer with non-gel-forming capacity. The chain is Mannuronan C5-epimerase AlgE4 from Azotobacter vinelandii.